Consider the following 426-residue polypeptide: Serine--tRNA ligase (426 aa).

231–233 (TSE) provides a ligand contact to L-serine. 262-264 (RSE) is a binding site for ATP. Residue Glu285 coordinates L-serine. 349–352 (EISS) is an ATP binding site. Ser385 is a binding site for L-serine.

This sequence belongs to the class-II aminoacyl-tRNA synthetase family. Type-1 seryl-tRNA synthetase subfamily. In terms of assembly, homodimer. The tRNA molecule binds across the dimer.

It is found in the cytoplasm. It catalyses the reaction tRNA(Ser) + L-serine + ATP = L-seryl-tRNA(Ser) + AMP + diphosphate + H(+). The catalysed reaction is tRNA(Sec) + L-serine + ATP = L-seryl-tRNA(Sec) + AMP + diphosphate + H(+). It functions in the pathway aminoacyl-tRNA biosynthesis; selenocysteinyl-tRNA(Sec) biosynthesis; L-seryl-tRNA(Sec) from L-serine and tRNA(Sec): step 1/1. Catalyzes the attachment of serine to tRNA(Ser). Is also able to aminoacylate tRNA(Sec) with serine, to form the misacylated tRNA L-seryl-tRNA(Sec), which will be further converted into selenocysteinyl-tRNA(Sec). This Legionella pneumophila (strain Lens) protein is Serine--tRNA ligase.